A 119-amino-acid chain; its full sequence is MRLSYIFVVVATIITNCDIASASLRAIMSDTASGNGLGTRILRQTNDSDDLEPIRHAMLDMELLEKIAKDPKYAEEVFGNWRHNGQTKAEMENRLQSNGLLGKYRFIIDRYAEHLANSE.

Positions 1 to 22 (MRLSYIFVVVATIITNCDIASA) are cleaved as a signal peptide. The short motif at 40-77 (RILRQTNDSDDLEPIRHAMLDMELLEKIAKDPKYAEEV) is the RxLR-dEER element. Asn-46 is a glycosylation site (N-linked (GlcNAc...) asparagine).

Belongs to the RxLR effector family.

It localises to the secreted. The protein resides in the host cytoplasm. Its subcellular location is the host nucleus. Secreted effector that suppresses pattern-triggered immunity (PTI) in plant host. The sequence is that of Secreted RxLR effector protein RXLR-C04 from Plasmopara halstedii (Downy mildew of sunflower).